The sequence spans 626 residues: DNA (cytosine-5)-methyltransferase DRM2 (626 aa).

UBA domains follow at residues 59–101 and 109–150; these read GFSD…ISKY and SSKS…LLSC. Positions 160 to 187 are enriched in acidic residues; that stretch reads VEEEDGIDWSSSDDDTNYTDMLNSDDEK. Disordered stretches follow at residues 160-196 and 245-282; these read VEEE…ENGS and TEHE…PNPM. The 43-residue stretch at 190-232 folds into the UBA 3 domain; the sequence is NSNENGSKIRSLVKMGFSELEASLAVERCGENVDIAELTDFLC. Residues 262-276 show a composition bias toward basic and acidic residues; the sequence is ESKGEPRSSVDDEPI. Residues 295 to 626 form the SAM-dependent MTase DRM-type domain; the sequence is THRSLPELAR…EVVRARMRGS (332 aa).

Belongs to the class I-like SAM-binding methyltransferase superfamily. DRM-methyltransferase family. Interacts with RDM1. As to expression, expressed in roots, inflorescences and at lower levels in leaves.

The protein resides in the nucleus. Its subcellular location is the nucleoplasm. The catalysed reaction is a 2'-deoxycytidine in DNA + S-adenosyl-L-methionine = a 5-methyl-2'-deoxycytidine in DNA + S-adenosyl-L-homocysteine + H(+). Its function is as follows. Involved in de novo DNA methylation. Controls asymmetric and CpNpG methylation. Required for FWA gene silencing but not for the maintenance of SUP gene silencing. Functionally redundant to CMT3 to maintain non-CpG methylation. Involved in RNA-directed DNA methylation (RdDM). Acts as major DNA methyltransferase in the RdDM pathway, and is essential for RNA-directed de novo DNA methylation of cytosines in all sequence contexts. Associates with long non-coding RNA (lncRNA) produced by RNA polymerase V (Pol V). This association is dependent on AGO4 and IDN2, and results in DNA methylation of RdDM target loci. This Arabidopsis thaliana (Mouse-ear cress) protein is DNA (cytosine-5)-methyltransferase DRM2 (DRM2).